Here is a 426-residue protein sequence, read N- to C-terminus: Enolase (426 aa).

Gln-162 lines the (2R)-2-phosphoglycerate pocket. Residue Glu-204 is the Proton donor of the active site. The Mg(2+) site is built by Asp-241, Glu-286, and Asp-313. (2R)-2-phosphoglycerate is bound by residues Lys-338, Arg-367, Ser-368, and Lys-389. Residue Lys-338 is the Proton acceptor of the active site.

It belongs to the enolase family. Mg(2+) is required as a cofactor.

Its subcellular location is the cytoplasm. The protein resides in the secreted. It localises to the cell surface. It catalyses the reaction (2R)-2-phosphoglycerate = phosphoenolpyruvate + H2O. Its pathway is carbohydrate degradation; glycolysis; pyruvate from D-glyceraldehyde 3-phosphate: step 4/5. In terms of biological role, catalyzes the reversible conversion of 2-phosphoglycerate (2-PG) into phosphoenolpyruvate (PEP). It is essential for the degradation of carbohydrates via glycolysis. This Aliarcobacter butzleri (strain RM4018) (Arcobacter butzleri) protein is Enolase.